We begin with the raw amino-acid sequence, 486 residues long: RAC-beta serine/threonine-protein kinase A (486 aa).

One can recognise a PH domain in the interval 5–110 (MVIKEGWLQK…WIIAIQTVAN (106 aa)). O-linked (GlcNAc) serine glycosylation is found at Ser133 and Ser136. The Protein kinase domain occupies 157–414 (FDYLKLLGKG…AQEVMSHRFF (258 aa)). Residues 163–171 (LGKGTFGKV) and Lys186 contribute to the ATP site. Asp280 functions as the Proton acceptor in the catalytic mechanism. O-linked (GlcNAc) threonine glycosylation occurs at Thr311. The residue at position 314 (Thr314) is a Phosphothreonine. Residue Thr318 is glycosylated (O-linked (GlcNAc) threonine). The AGC-kinase C-terminal domain maps to 415 to 486 (VSINWQDVTE…QFSYSASIRE (72 aa)). Residues 455-486 (LTPPDRYDNLDALESDQRPHFPQFSYSASIRE) form a disordered region. Over residues 459 to 473 (DRYDNLDALESDQRP) the composition is skewed to basic and acidic residues. The residue at position 479 (Ser479) is a Phosphoserine. A glycan (O-linked (GlcNAc) serine; alternate) is linked at Ser479.

The protein belongs to the protein kinase superfamily. AGC Ser/Thr protein kinase family. RAC subfamily. In terms of processing, phosphorylation on Thr-314 and Ser-479 is required for full activity. Phosphorylation of the activation loop at Thr-314 by PDPK1/PDK1 is a prerequisite for full activation. Phosphorylation by mTORC2 at Ser-479 in response to growth factors plays a key role in AKT1 activation by facilitating subsequent phosphorylation of the activation loop by PDPK1/PDK1.

It catalyses the reaction L-seryl-[protein] + ATP = O-phospho-L-seryl-[protein] + ADP + H(+). The enzyme catalyses L-threonyl-[protein] + ATP = O-phospho-L-threonyl-[protein] + ADP + H(+). Two specific sites, one in the kinase domain (Thr-314) and the other in the C-terminal regulatory region (Ser-479), need to be phosphorylated for its full activation. Its function is as follows. Akt2-a is one of several closely related serine/threonine-protein kinases known as the AKT kinase, and which regulate many processes including metabolism, proliferation, cell survival, growth and angiogenesis. This is mediated through serine and/or threonine phosphorylation of a range of downstream substrates. Over 100 substrate candidates have been reported so far, but for most of them, no isoform specificity has been reported. May be involved in the inhibition of ciliogenesis. This chain is RAC-beta serine/threonine-protein kinase A (akt2-a), found in Xenopus laevis (African clawed frog).